Reading from the N-terminus, the 134-residue chain is NADPH-dependent 7-cyano-7-deazaguanine reductase (134 aa).

Cys48 serves as the catalytic Thioimide intermediate. Asp55 functions as the Proton donor in the catalytic mechanism. Substrate contacts are provided by residues 70 to 72 and 89 to 90; these read VEL and QE.

Belongs to the GTP cyclohydrolase I family. QueF type 1 subfamily.

It is found in the cytoplasm. The catalysed reaction is 7-aminomethyl-7-carbaguanine + 2 NADP(+) = 7-cyano-7-deazaguanine + 2 NADPH + 3 H(+). The protein operates within tRNA modification; tRNA-queuosine biosynthesis. Functionally, catalyzes the NADPH-dependent reduction of 7-cyano-7-deazaguanine (preQ0) to 7-aminomethyl-7-deazaguanine (preQ1). This chain is NADPH-dependent 7-cyano-7-deazaguanine reductase, found in Caldanaerobacter subterraneus subsp. tengcongensis (strain DSM 15242 / JCM 11007 / NBRC 100824 / MB4) (Thermoanaerobacter tengcongensis).